Consider the following 55-residue polypeptide: Large ribosomal subunit protein bL33 (55 aa).

Belongs to the bacterial ribosomal protein bL33 family.

The sequence is that of Large ribosomal subunit protein bL33 from Orientia tsutsugamushi (strain Boryong) (Rickettsia tsutsugamushi).